The primary structure comprises 61 residues: Small ribosomal subunit protein uS14 (61 aa).

The Zn(2+) site is built by Cys24, Cys27, Cys40, and Cys43.

Belongs to the universal ribosomal protein uS14 family. Zinc-binding uS14 subfamily. In terms of assembly, part of the 30S ribosomal subunit. Contacts proteins S3 and S10. It depends on Zn(2+) as a cofactor.

In terms of biological role, binds 16S rRNA, required for the assembly of 30S particles and may also be responsible for determining the conformation of the 16S rRNA at the A site. This is Small ribosomal subunit protein uS14 from Trichlorobacter lovleyi (strain ATCC BAA-1151 / DSM 17278 / SZ) (Geobacter lovleyi).